The following is a 272-amino-acid chain: Glutamate racemase (272 aa).

Substrate-binding positions include 10–11 (DS) and 42–43 (YG). The active-site Proton donor/acceptor is C74. Substrate is bound at residue 75 to 76 (NT). Residue C185 is the Proton donor/acceptor of the active site. Substrate is bound at residue 186-187 (TH).

It belongs to the aspartate/glutamate racemases family.

The enzyme catalyses L-glutamate = D-glutamate. It functions in the pathway cell wall biogenesis; peptidoglycan biosynthesis. In terms of biological role, provides the (R)-glutamate required for cell wall biosynthesis. The protein is Glutamate racemase of Bacillus velezensis (strain DSM 23117 / BGSC 10A6 / LMG 26770 / FZB42) (Bacillus amyloliquefaciens subsp. plantarum).